A 296-amino-acid polypeptide reads, in one-letter code: Cholesterol ring-cleaving hydrolase IpdA subunit (296 aa).

The protein belongs to the 3-oxoacid CoA-transferase subunit A family. Heterotetramer composed of 2 IpdA subunits and 2 IpdB subunits.

It catalyses the reaction (3E)-2-(2-carboxylatoethyl)-3-methyl-6-oxocyclohex-1-ene-1-carboxyl-CoA + H2O = 6-methyl-3,7-dioxodecanedioyl-CoA. It participates in steroid metabolism; cholesterol degradation. Functionally, involved in the final steps of cholesterol and steroid degradation. Opens the last steroid ring of cholesterol by catalyzing the hydrolysis of (3E)-2-(2-carboxylatoethyl)-3-methyl-6-oxocyclohex-1-ene-1-carboxyl-CoA (COCHEA-CoA) to 6-methyl-3,7-dioxodecanedioyl-CoA (MeDODA-CoA). The sequence is that of Cholesterol ring-cleaving hydrolase IpdA subunit from Rhodococcus jostii (strain RHA1).